A 318-amino-acid chain; its full sequence is MSFLLFITLGLSLTALSHCVQVTIQNPIINVTSGQNATLYCTYILNNQNKNNLVIQWNIFQAKSQNQETVFFYQNGQSLSGPSYKNRVTAAMSPGNATITISNMQSQDTGIYTCEVLNLPESSGQGKILLTVLVPPSVPHCSIRGAVETGHFISLLCYSEEGMPRPIYSWNRVENGLLKSTPSQMNQQKGSLIIGNLTDFEEGYYRCTASNNLGNATCELNLHTGGEGGVIAAAVIGGLLAAAIIIAIVWFLVVKRKQKKQLPPTKEMKTGGNQYMAVSGEANEPPKENLGASEPTETIQFHDHAENAANGETEEPTA.

An N-terminal signal peptide occupies residues methionine 1–cysteine 19. Residues valine 20–threonine 131 enclose the Ig-like V-type domain. Residues valine 20–alanine 233 are Extracellular-facing. 2 cysteine pairs are disulfide-bonded: cysteine 41/cysteine 114 and cysteine 157/cysteine 207. One can recognise an Ig-like C2-type domain in the interval proline 136–histidine 223. The helical transmembrane segment at alanine 234 to valine 254 threads the bilayer. The Cytoplasmic segment spans residues lysine 255–alanine 318. The segment at glutamine 261–alanine 318 is disordered.

Expressed in thymocytes.

It localises to the membrane. The polypeptide is V-set and immunoglobulin domain-containing protein 1 (vsig1) (Xenopus laevis (African clawed frog)).